The following is a 187-amino-acid chain: Elongation factor P (187 aa).

The protein belongs to the elongation factor P family.

It localises to the cytoplasm. It functions in the pathway protein biosynthesis; polypeptide chain elongation. In terms of biological role, involved in peptide bond synthesis. Stimulates efficient translation and peptide-bond synthesis on native or reconstituted 70S ribosomes in vitro. Probably functions indirectly by altering the affinity of the ribosome for aminoacyl-tRNA, thus increasing their reactivity as acceptors for peptidyl transferase. In Mycobacterium avium (strain 104), this protein is Elongation factor P.